We begin with the raw amino-acid sequence, 364 residues long: Protein-glutamate methylesterase/protein-glutamine glutaminase 3 (364 aa).

The region spanning 7-124 (RVLIVDDSAS…THALLEASAR (118 aa)) is the Response regulatory domain. 4-aspartylphosphate is present on Asp-58. The CheB-type methylesterase domain occupies 167-358 (PTTERLVCIG…REIMLWQDAK (192 aa)). Active-site residues include Ser-178, His-204, and Asp-300.

Belongs to the CheB family. In terms of processing, phosphorylated by CheA. Phosphorylation of the N-terminal regulatory domain activates the methylesterase activity.

It is found in the cytoplasm. It catalyses the reaction [protein]-L-glutamate 5-O-methyl ester + H2O = L-glutamyl-[protein] + methanol + H(+). The enzyme catalyses L-glutaminyl-[protein] + H2O = L-glutamyl-[protein] + NH4(+). In terms of biological role, involved in chemotaxis. Part of a chemotaxis signal transduction system that modulates chemotaxis in response to various stimuli. Catalyzes the demethylation of specific methylglutamate residues introduced into the chemoreceptors (methyl-accepting chemotaxis proteins or MCP) by CheR. Also mediates the irreversible deamidation of specific glutamine residues to glutamic acid. This chain is Protein-glutamate methylesterase/protein-glutamine glutaminase 3, found in Rhodopseudomonas palustris (strain BisB18).